Consider the following 170-residue polypeptide: Photosystem I assembly protein Ycf3 (170 aa).

TPR repeat units follow at residues 35–68 (AFTY…EIDP), 72–105 (SYIL…NPFL), and 120–153 (GEQA…TPGN).

This sequence belongs to the Ycf3 family.

The protein resides in the plastid. It is found in the chloroplast thylakoid membrane. Its function is as follows. Essential for the assembly of the photosystem I (PSI) complex. May act as a chaperone-like factor to guide the assembly of the PSI subunits. The chain is Photosystem I assembly protein Ycf3 from Saccharum officinarum (Sugarcane).